Reading from the N-terminus, the 303-residue chain is Probable 5-dehydro-4-deoxyglucarate dehydratase (303 aa).

The protein belongs to the DapA family.

It catalyses the reaction 5-dehydro-4-deoxy-D-glucarate + H(+) = 2,5-dioxopentanoate + CO2 + H2O. It participates in carbohydrate acid metabolism; D-glucarate degradation; 2,5-dioxopentanoate from D-glucarate: step 2/2. This is Probable 5-dehydro-4-deoxyglucarate dehydratase from Acidovorax ebreus (strain TPSY) (Diaphorobacter sp. (strain TPSY)).